We begin with the raw amino-acid sequence, 179 residues long: Adenine phosphoribosyltransferase (179 aa).

This sequence belongs to the purine/pyrimidine phosphoribosyltransferase family. As to quaternary structure, homodimer.

Its subcellular location is the cytoplasm. The enzyme catalyses AMP + diphosphate = 5-phospho-alpha-D-ribose 1-diphosphate + adenine. It functions in the pathway purine metabolism; AMP biosynthesis via salvage pathway; AMP from adenine: step 1/1. In terms of biological role, catalyzes a salvage reaction resulting in the formation of AMP, that is energically less costly than de novo synthesis. This is Adenine phosphoribosyltransferase from Actinobacillus pleuropneumoniae serotype 5b (strain L20).